Consider the following 489-residue polypeptide: Coronin-1B (489 aa).

Ser-2 carries the post-translational modification Phosphoserine. WD repeat units lie at residues 80–120 (GHTG…LTSP), 130–170 (GHTK…ELYR), 174–213 (LHPD…LVAE), 217–260 (AHEG…EPMA), and 265–305 (DSSN…PYIH). The segment at 414–443 (DSRPAMAPGSSRLGAPASTTAAADATPSGS) is disordered. The span at 427–443 (GAPASTTAAADATPSGS) shows a compositional bias: low complexity. Positions 449 to 474 (EAGKLEEVMQELRALRALVKEQGERI) form a coiled coil.

Belongs to the WD repeat coronin family. In terms of assembly, forms homooligomers, but does not form complexes with the other coronins. Interacts with Arp2/3 complex components, including ACTR2, ARPC1B and ARPC2. Binds actin. Post-translationally, phosphorylation on Ser-2 regulates the interaction with the Arp2/3 complex and cell motility in fibroblasts. Phosphorylation does not seem to affect subcellular location.

The protein localises to the cytoplasm. It localises to the cytoskeleton. It is found in the stress fiber. In terms of biological role, regulates leading edge dynamics and cell motility in fibroblasts. May be involved in cytokinesis and signal transduction. In Pongo abelii (Sumatran orangutan), this protein is Coronin-1B (CORO1B).